The following is a 346-amino-acid chain: 4-hydroxy-2-oxovalerate aldolase (346 aa).

The region spanning 8-260 (VTLHDMSLRD…ETGIDLYKIM (253 aa)) is the Pyruvate carboxyltransferase domain. Position 16–17 (16–17 (RD)) interacts with substrate. Aspartate 17 serves as a coordination point for Mn(2+). Catalysis depends on histidine 20, which acts as the Proton acceptor. The substrate site is built by serine 170 and histidine 199. 2 residues coordinate Mn(2+): histidine 199 and histidine 201. Substrate is bound at residue tyrosine 290.

This sequence belongs to the 4-hydroxy-2-oxovalerate aldolase family.

The catalysed reaction is (S)-4-hydroxy-2-oxopentanoate = acetaldehyde + pyruvate. The chain is 4-hydroxy-2-oxovalerate aldolase (nahM) from Stutzerimonas stutzeri (Pseudomonas stutzeri).